Here is a 234-residue protein sequence, read N- to C-terminus: HTH-type transcriptional regulator ArcR (234 aa).

A nucleoside 3',5'-cyclic phosphate is bound at residue 40–129 (VRHYTKGQVI…MAFLCKANDD (90 aa)). The HTH crp-type domain maps to 155 to 228 (KFAKDRIIKL…HKNWLVSKHL (74 aa)). The segment at residues 188–207 (IQLMSDMAGISRETAGHIIH) is a DNA-binding region (H-T-H motif).

It is found in the cytoplasm. Its function is as follows. Positively regulates the expression of the arcABDCR operon under anaerobic conditions, thus playing an essential role in arginine catabolism. May also control the expression of genes encoding proteins which are involved in anaerobic metabolism. Can bind cyclic AMP. The protein is HTH-type transcriptional regulator ArcR (arcR) of Staphylococcus aureus (strain MSSA476).